Reading from the N-terminus, the 281-residue chain is E2F-associated phosphoprotein (281 aa).

The residue at position 1 (Met1) is an N-acetylmethionine. A disordered region spans residues 1 to 27 (MNRLQDDYDPYAVEEPSDEEPALSSSE). The span at 15 to 27 (EPSDEEPALSSSE) shows a compositional bias: acidic residues. Ser17 is modified (phosphoserine). Phosphothreonine is present on Thr37. Residues Ser109 and Ser111 each carry the phosphoserine modification. Residues 222 to 245 (PENRRKRRSAKKMRSNPEDPAERE) are disordered. Over residues 225 to 235 (RRKRRSAKKMR) the composition is skewed to basic residues. Positions 236-245 (SNPEDPAERE) are enriched in basic and acidic residues.

As to quaternary structure, interacts with E2F1. The C-terminal half binds the N-terminal of E2F1. Also interacts with E2F2 and E2F3, but not E2F4.

It localises to the cytoplasm. The protein localises to the nucleus. May play an important role in the fine-tuning of both major E2F1 activities, the regulation of the cell-cycle and the induction of apoptosis. Promotes S-phase entry, and inhibits p14(ARP) expression. This chain is E2F-associated phosphoprotein (Eapp), found in Mus musculus (Mouse).